We begin with the raw amino-acid sequence, 201 residues long: Probable nicotinate-nucleotide adenylyltransferase (201 aa).

This sequence belongs to the NadD family.

The enzyme catalyses nicotinate beta-D-ribonucleotide + ATP + H(+) = deamido-NAD(+) + diphosphate. It participates in cofactor biosynthesis; NAD(+) biosynthesis; deamido-NAD(+) from nicotinate D-ribonucleotide: step 1/1. In terms of biological role, catalyzes the reversible adenylation of nicotinate mononucleotide (NaMN) to nicotinic acid adenine dinucleotide (NaAD). The chain is Probable nicotinate-nucleotide adenylyltransferase from Clostridium botulinum (strain Okra / Type B1).